We begin with the raw amino-acid sequence, 206 residues long: Small ribosomal subunit protein uS4 (206 aa).

The S4 RNA-binding domain maps to 96 to 158 (SRLDNVVYRM…AKGQLRIKGA (63 aa)).

This sequence belongs to the universal ribosomal protein uS4 family. As to quaternary structure, part of the 30S ribosomal subunit. Contacts protein S5. The interaction surface between S4 and S5 is involved in control of translational fidelity.

One of the primary rRNA binding proteins, it binds directly to 16S rRNA where it nucleates assembly of the body of the 30S subunit. In terms of biological role, with S5 and S12 plays an important role in translational accuracy. The protein is Small ribosomal subunit protein uS4 of Coxiella burnetii (strain CbuK_Q154) (Coxiella burnetii (strain Q154)).